Consider the following 123-residue polypeptide: Small ribosomal subunit protein uS8 (123 aa).

It belongs to the universal ribosomal protein uS8 family. In terms of assembly, part of the 30S ribosomal subunit. Contacts proteins S5 and S12.

Its function is as follows. One of the primary rRNA binding proteins, it binds directly to 16S rRNA central domain where it helps coordinate assembly of the platform of the 30S subunit. The polypeptide is Small ribosomal subunit protein uS8 (rpsH) (Carsonella ruddii (strain PV)).